A 193-amino-acid chain; its full sequence is Fibrillarin-like rRNA/tRNA 2'-O-methyltransferase (193 aa).

Residues 82 to 83, 100 to 101, 125 to 126, and 145 to 148 contribute to the S-adenosyl-L-methionine site; these read TT, EF, DA, and DVAQ.

The protein belongs to the methyltransferase superfamily. Fibrillarin family. Interacts with nop5. Component of box C/D small ribonucleoprotein (sRNP) particles that contain rpl7ae, FlpA and nop5, plus a guide RNA.

Involved in pre-rRNA and tRNA processing. Utilizes the methyl donor S-adenosyl-L-methionine to catalyze the site-specific 2'-hydroxyl methylation of ribose moieties in rRNA and tRNA. Site specificity is provided by a guide RNA that base pairs with the substrate. Methylation occurs at a characteristic distance from the sequence involved in base pairing with the guide RNA. In Methanosarcina mazei (Methanosarcina frisia), this protein is Fibrillarin-like rRNA/tRNA 2'-O-methyltransferase.